The chain runs to 339 residues: Methionine synthase (339 aa).

Residues H212, C214, and C295 each coordinate Zn(2+).

It belongs to the archaeal MetE family. It depends on Zn(2+) as a cofactor.

It participates in amino-acid biosynthesis; L-methionine biosynthesis via de novo pathway. Functionally, catalyzes the transfer of a methyl group to L-homocysteine resulting in methionine formation. The physiological methyl donor is unknown. The protein is Methionine synthase of Sulfolobus acidocaldarius (strain ATCC 33909 / DSM 639 / JCM 8929 / NBRC 15157 / NCIMB 11770).